Consider the following 125-residue polypeptide: Fluoride-specific ion channel FluC (125 aa).

4 helical membrane passes run 4-24, 36-56, 68-88, and 100-120; these read PLLA…LLAV, GTLL…AWFA, LITT…LEVV, and VISV…GFWL. The Na(+) site is built by Gly-75 and Thr-78.

This sequence belongs to the fluoride channel Fluc/FEX (TC 1.A.43) family.

It localises to the cell inner membrane. The catalysed reaction is fluoride(in) = fluoride(out). With respect to regulation, na(+) is not transported, but it plays an essential structural role and its presence is essential for fluoride channel function. Its function is as follows. Fluoride-specific ion channel. Important for reducing fluoride concentration in the cell, thus reducing its toxicity. The sequence is that of Fluoride-specific ion channel FluC from Erwinia tasmaniensis (strain DSM 17950 / CFBP 7177 / CIP 109463 / NCPPB 4357 / Et1/99).